The primary structure comprises 202 residues: B-cell CLL/lymphoma 7 protein family member B (202 aa).

The disordered stretch occupies residues 53-202 (DSKEKEKSKS…PTVPQTASES (150 aa)). The segment covering 90–99 (ENSNQSSVSD) has biased composition (polar residues). Residues 107 to 123 (SSTNSSPSPQQSESLSP) show a composition bias toward low complexity. Phosphoserine occurs at positions 114, 118, 120, 122, 127, 148, and 152.

Belongs to the BCL7 family. As to expression, ubiquitous.

In terms of biological role, positive regulator of apoptosis. Plays a role in the Wnt signaling pathway, negatively regulating the expression of Wnt signaling components CTNNB1 and HMGA1. Involved in cell cycle progression, maintenance of the nuclear structure and stem cell differentiation. May play a role in lung tumor development or progression. The protein is B-cell CLL/lymphoma 7 protein family member B (BCL7B) of Homo sapiens (Human).